The following is a 782-amino-acid chain: MQEVCSSLDTTSMGTQIKSESPLNPLQVQTGQTSLPVGGCGGAGVVGGVGGVGVSVGQPGIGQQGVPPVPSVLMVNKMTPNCDKRSADTAYWMTASEGGFINSQPSMAEFLNHLSPESPKIGTPVGSGAIGGVGVNVNVNVGVGVGYPVGVVPQTPDGMDSVPEYPWMKEKKTSRKSSNNNNQGDNSITEFVPENGLPRRLRTAYTNTQLLELEKEFHFNKYLCRPRRIEIAASLDLTERQVKVWFQNRRMKHKRQTLSKTDDEDNKDSLKGDDDQSDSNSNSKKSCQGCELPSDDIPDSTSNSRGHNNNTPSATNNNPSAGNLTPNSSLETGISSNLMGSTTVSASNVISADSSVASSVSLDEDIEESSPIKVKKKDDGQVIKKEAVSTSSKASPFGYENSTPSLVSFRRDSDASAVGNAPTSKAVGKKRFQSAANAIATPTPLSDSNSGNGSGGGPAGGYFPGYYPSPKQQQQVQQQQLHPQQQQLPQQQPQDYYGKYDIEFAASPHHNPHNKQQALHGEYLSPKPSSANFHQNSQQQQQNDHFYYNYNDTNGTPYLNHQQQHHHHAQHHQQQQHHQNHVADFEGPVNGPSNFNNGAYYDNMSFQQQAQAHQHQTVVFQQQQPHQPAAINHQHMHHLGNGETYSALGLQMENCEGYNNFGAAGTGGGYYEAGQQPPIPATHGHGHHPHHVQVPAQAHAPIHAHHNSAAIPGGVGVGPPPSHIHGFAINGGPAVQGQAFGNNGSTAAGTAAISGLENSNSSDFNFLSNLANDFAPEYYQLS.

Disordered stretches follow at residues 1–23 (MQEVCSSLDTTSMGTQIKSESPL), 153–195 (PQTP…VPEN), 251–336 (MKHK…GISS), 358–380 (SSVSLDEDIEESSPIKVKKKDDG), 439–493 (IATP…QQQP), and 547–586 (YYNYNDTNGTPYLNHQQQHHHHAQHHQQQQHHQNHVADFE). The Antp-type hexapeptide signature appears at 164 to 169 (EYPWMK). The homeobox DNA-binding region spans 198–257 (PRRLRTAYTNTQLLELEKEFHFNKYLCRPRRIEIAASLDLTERQVKVWFQNRRMKHKRQT). Low complexity predominate over residues 308–321 (NNNTPSATNNNPSA). Residues 322–336 (GNLTPNSSLETGISS) show a composition bias toward polar residues. Over residues 452-463 (NGSGGGPAGGYF) the composition is skewed to gly residues. Residues 464–493 (PGYYPSPKQQQQVQQQQLHPQQQQLPQQQP) are compositionally biased toward low complexity. The span at 563 to 580 (QQHHHHAQHHQQQQHHQN) shows a compositional bias: basic residues.

It belongs to the Antp homeobox family. Proboscipedia subfamily.

It localises to the nucleus. Functionally, sequence-specific transcription factor which is part of a developmental regulatory system that provides cells with specific positional identities on the anterior-posterior axis. Controls development of mouthparts, and labial and maxillary palps. In Drosophila melanogaster (Fruit fly), this protein is Homeotic protein proboscipedia (pb).